Consider the following 207-residue polypeptide: Ribosomal RNA small subunit methyltransferase G (207 aa).

S-adenosyl-L-methionine-binding positions include G73, L78, 124 to 125 (VE), and R139.

The protein belongs to the methyltransferase superfamily. RNA methyltransferase RsmG family.

The protein localises to the cytoplasm. It carries out the reaction guanosine(527) in 16S rRNA + S-adenosyl-L-methionine = N(7)-methylguanosine(527) in 16S rRNA + S-adenosyl-L-homocysteine. Functionally, specifically methylates the N7 position of guanine in position 527 of 16S rRNA. This is Ribosomal RNA small subunit methyltransferase G from Escherichia coli O17:K52:H18 (strain UMN026 / ExPEC).